A 182-amino-acid polypeptide reads, in one-letter code: Adenine phosphoribosyltransferase (182 aa).

The protein belongs to the purine/pyrimidine phosphoribosyltransferase family. In terms of assembly, homodimer.

It localises to the cytoplasm. It catalyses the reaction AMP + diphosphate = 5-phospho-alpha-D-ribose 1-diphosphate + adenine. It participates in purine metabolism; AMP biosynthesis via salvage pathway; AMP from adenine: step 1/1. Functionally, catalyzes a salvage reaction resulting in the formation of AMP, that is energically less costly than de novo synthesis. The chain is Adenine phosphoribosyltransferase from Shewanella frigidimarina (strain NCIMB 400).